Consider the following 256-residue polypeptide: Probable septum site-determining protein MinC (256 aa).

The interval 105 to 143 (RRGATAKPEPADEAEPPVAAAAAEAVPEPAPELAPSAPT) is disordered. The segment covering 120-142 (PPVAAAAAEAVPEPAPELAPSAP) has biased composition (low complexity).

The protein belongs to the MinC family. In terms of assembly, interacts with MinD and FtsZ.

Its function is as follows. Cell division inhibitor that blocks the formation of polar Z ring septums. Rapidly oscillates between the poles of the cell to destabilize FtsZ filaments that have formed before they mature into polar Z rings. Prevents FtsZ polymerization. The protein is Probable septum site-determining protein MinC of Burkholderia vietnamiensis (strain G4 / LMG 22486) (Burkholderia cepacia (strain R1808)).